The chain runs to 293 residues: Ribosomal protein L11 methyltransferase (293 aa).

4 residues coordinate S-adenosyl-L-methionine: threonine 145, glycine 166, aspartate 188, and asparagine 230.

It belongs to the methyltransferase superfamily. PrmA family.

It is found in the cytoplasm. The enzyme catalyses L-lysyl-[protein] + 3 S-adenosyl-L-methionine = N(6),N(6),N(6)-trimethyl-L-lysyl-[protein] + 3 S-adenosyl-L-homocysteine + 3 H(+). Its function is as follows. Methylates ribosomal protein L11. The chain is Ribosomal protein L11 methyltransferase from Shewanella pealeana (strain ATCC 700345 / ANG-SQ1).